A 73-amino-acid chain; its full sequence is Conotoxin Vc6.17 (73 aa).

Positions 1-19 (MQKLIILLLVAAVLMSTQA) are cleaved as a signal peptide. Positions 20–44 (LFQEKRRKEKIDLLSKRKTDAEKQH) are excised as a propeptide. Cystine bridges form between Cys48–Cys62, Cys55–Cys66, and Cys61–Cys71.

This sequence belongs to the conotoxin O2 superfamily. Expressed by the venom duct.

It localises to the secreted. Inhibits voltage-gated ion channels. The chain is Conotoxin Vc6.17 from Conus victoriae (Queen Victoria cone).